Reading from the N-terminus, the 148-residue chain is Endothelial differentiation-related factor 1 homolog (148 aa).

A disordered region spans residues 1-26 (MAESDWDTVTVLRKKGPSAAQAKSKQ). In terms of domain architecture, HTH cro/C1-type spans 81–135 (IQQGRQSKGMTQKDLATKINEKPQVIADYESGRAIPNNQVMGKIERAIGLKLRGK). A DNA-binding region (H-T-H motif) is located at residues 92–111 (QKDLATKINEKPQVIADYES).

The protein localises to the nucleus. In terms of biological role, probable transcriptional coactivator. The sequence is that of Endothelial differentiation-related factor 1 homolog (EDF1) from Gallus gallus (Chicken).